Reading from the N-terminus, the 44-residue chain is Large ribosomal subunit protein bL36 (44 aa).

The protein belongs to the bacterial ribosomal protein bL36 family.

The sequence is that of Large ribosomal subunit protein bL36 from Pseudoalteromonas translucida (strain TAC 125).